The following is a 467-amino-acid chain: Gamma-aminobutyric acid receptor subunit gamma-2 (467 aa).

Residues 1-39 (MSSPNIWSTGSSVYSTPVFSQKMTVWILLLLSLYPGFTS) form the signal peptide. Residues 40–275 (QKSDDDYEDY…FDLSRRMGYF (236 aa)) are Extracellular-facing. Residues asparagine 52 and asparagine 129 are each glycosylated (N-linked (GlcNAc...) asparagine). Cysteine 190 and cysteine 204 form a disulfide bridge. An N-linked (GlcNAc...) asparagine glycan is attached at asparagine 247. The helical transmembrane segment at 276 to 296 (TIQTYIPCTLIVVLSWVSFWI) threads the bilayer. The Cytoplasmic segment spans residues 297–302 (NKDAVP). Residues 303-322 (ARTSLGITTVLTMTTLSTIA) form a helical membrane-spanning segment. The Extracellular segment spans residues 323-334 (RKSLPKVSYVTA). The helical transmembrane segment at 335 to 359 (MDLFVSVCFIFVFSALVEYGTLHYF) threads the bilayer. Topologically, residues 360-443 (VSNRKPSKDK…IHIRIAKMDS (84 aa)) are cytoplasmic. Positions 425-442 (RTGAWRHGRIHIRIAKMD) are interaction with GABARAP. The helical transmembrane segment at 444–464 (YARIFFPTAFCLFNLVYWVSY) threads the bilayer. At 465-467 (LYL) the chain is on the extracellular side.

Belongs to the ligand-gated ion channel (TC 1.A.9) family. Gamma-aminobutyric acid receptor (TC 1.A.9.5) subfamily. GABRG2 sub-subfamily. Heteropentamer, formed by a combination of alpha (GABRA1-6), beta (GABRB1-3), gamma (GABRG1-3), delta (GABRD), epsilon (GABRE), rho (GABRR1-3), pi (GABRP) and theta (GABRQ) chains, each subunit exhibiting distinct physiological and pharmacological properties. Interacts with GABARAP. Interacts with KIF21B. Identified in a complex of 720 kDa composed of LHFPL4, NLGN2, GABRA1, GABRB2, GABRG2 and GABRB3. Interacts with LHFPL4. Interacts with SHISA7; interaction leads to the regulation of GABA(A) receptor trafficking, channel deactivation kinetics and pharmacology. Palmitoylated by ZDHHC3/GODZ; required for the accumulation of GABA(A) receptors at the postsynaptic membrane of inhibitory GABAergic synapses. In terms of processing, glycosylated.

It localises to the postsynaptic cell membrane. The protein localises to the cell membrane. Its subcellular location is the cell projection. It is found in the dendrite. The protein resides in the cytoplasmic vesicle membrane. The enzyme catalyses chloride(in) = chloride(out). Its activity is regulated as follows. Allosterically activated by benzodiazepines. Activated by pentobarbital. Inhibited by the antagonist bicuculline. Inhibited by zinc ions. Potentiated by histamine. Its function is as follows. Gamma subunit of the heteropentameric ligand-gated chloride channel gated by gamma-aminobutyric acid (GABA), a major inhibitory neurotransmitter in the brain. GABA-gated chloride channels, also named GABA(A) receptors (GABAAR), consist of five subunits arranged around a central pore and contain GABA active binding site(s) located at the alpha and beta subunit interface(s). When activated by GABA, GABAARs selectively allow the flow of chloride anions across the cell membrane down their electrochemical gradient. Gamma-2/GABRG2-containing GABAARs are found at both synaptic and extrasynaptic sites. Chloride influx into the postsynaptic neuron following GABAAR opening decreases the neuron ability to generate a new action potential, thereby reducing nerve transmission. GABAARs containing alpha-1 and beta-2 or -3 subunits exhibit synaptogenic activity; the gamma-2 subunit being necessary but not sufficient to induce rapid synaptic contacts formation. Extrasynaptic gamma-2-containing receptors contribute to the tonic GABAergic inhibition. GABAARs function also as histamine receptor where histamine binds at the interface of two neighboring beta subunits and potentiates GABA response in a gamma-2 subunit-controlled manner. The chain is Gamma-aminobutyric acid receptor subunit gamma-2 (GABRG2) from Pongo abelii (Sumatran orangutan).